Consider the following 407-residue polypeptide: Cytochrome P450-pinF2, plant-inducible (407 aa).

Position 356 (C356) interacts with heme.

Belongs to the cytochrome P450 family. It depends on heme as a cofactor.

Functionally, not essential for virulence, but may be involved in the detoxification of plant protective agents at the site of wounding. This is Cytochrome P450-pinF2, plant-inducible (cyp104) from Rhizobium radiobacter (Agrobacterium tumefaciens).